We begin with the raw amino-acid sequence, 84 residues long: Acid stress protein IbaG (84 aa).

It belongs to the BolA/IbaG family.

Its function is as follows. Involved in cell resistance against acid stress. The sequence is that of Acid stress protein IbaG from Escherichia coli O6:H1 (strain CFT073 / ATCC 700928 / UPEC).